Reading from the N-terminus, the 347-residue chain is Dihydroorotase (347 aa).

2 residues coordinate Zn(2+): His-14 and His-16. Residues 16-18 (HLR) and Asn-42 contribute to the substrate site. Positions 100, 137, and 175 each coordinate Zn(2+). Lys-100 carries the post-translational modification N6-carboxylysine. His-137 provides a ligand contact to substrate. Residue Leu-220 coordinates substrate. Position 248 (Asp-248) interacts with Zn(2+). Asp-248 is an active-site residue. Substrate is bound by residues His-252 and Ala-264.

The protein belongs to the metallo-dependent hydrolases superfamily. DHOase family. Class II DHOase subfamily. Homodimer. Zn(2+) serves as cofactor.

The enzyme catalyses (S)-dihydroorotate + H2O = N-carbamoyl-L-aspartate + H(+). Its pathway is pyrimidine metabolism; UMP biosynthesis via de novo pathway; (S)-dihydroorotate from bicarbonate: step 3/3. In terms of biological role, catalyzes the reversible cyclization of carbamoyl aspartate to dihydroorotate. The chain is Dihydroorotase from Pseudomonas savastanoi pv. phaseolicola (strain 1448A / Race 6) (Pseudomonas syringae pv. phaseolicola (strain 1448A / Race 6)).